The following is a 179-amino-acid chain: uncharacterized protein (179 aa).

Its subcellular location is the plastid. The protein resides in the cyanelle. This is an uncharacterized protein from Cyanophora paradoxa.